A 262-amino-acid chain; its full sequence is Hydroxyethylthiazole kinase (262 aa).

Met50 is a substrate binding site. ATP is bound by residues Arg125 and Thr171. Gly198 is a binding site for substrate.

It belongs to the Thz kinase family. Mg(2+) serves as cofactor.

It carries out the reaction 5-(2-hydroxyethyl)-4-methylthiazole + ATP = 4-methyl-5-(2-phosphooxyethyl)-thiazole + ADP + H(+). It participates in cofactor biosynthesis; thiamine diphosphate biosynthesis; 4-methyl-5-(2-phosphoethyl)-thiazole from 5-(2-hydroxyethyl)-4-methylthiazole: step 1/1. Catalyzes the phosphorylation of the hydroxyl group of 4-methyl-5-beta-hydroxyethylthiazole (THZ). The chain is Hydroxyethylthiazole kinase from Escherichia coli O6:H1 (strain CFT073 / ATCC 700928 / UPEC).